The chain runs to 475 residues: Ribulose bisphosphate carboxylase large chain (475 aa).

The propeptide occupies 1 to 2; sequence MS. P3 bears the N-acetylproline mark. K14 is subject to N6,N6,N6-trimethyllysine. Substrate is bound by residues N123 and T173. The active-site Proton acceptor is K175. K177 contributes to the substrate binding site. K201, D203, and E204 together coordinate Mg(2+). K201 bears the N6-carboxylysine mark. Catalysis depends on H294, which acts as the Proton acceptor. Substrate contacts are provided by R295, H327, and S379.

This sequence belongs to the RuBisCO large chain family. Type I subfamily. In terms of assembly, heterohexadecamer of 8 large chains and 8 small chains; disulfide-linked. The disulfide link is formed within the large subunit homodimers. Mg(2+) is required as a cofactor. In terms of processing, the disulfide bond which can form in the large chain dimeric partners within the hexadecamer appears to be associated with oxidative stress and protein turnover.

It is found in the plastid. The protein resides in the chloroplast. The enzyme catalyses 2 (2R)-3-phosphoglycerate + 2 H(+) = D-ribulose 1,5-bisphosphate + CO2 + H2O. It catalyses the reaction D-ribulose 1,5-bisphosphate + O2 = 2-phosphoglycolate + (2R)-3-phosphoglycerate + 2 H(+). RuBisCO catalyzes two reactions: the carboxylation of D-ribulose 1,5-bisphosphate, the primary event in carbon dioxide fixation, as well as the oxidative fragmentation of the pentose substrate in the photorespiration process. Both reactions occur simultaneously and in competition at the same active site. In Physcomitrium patens (Spreading-leaved earth moss), this protein is Ribulose bisphosphate carboxylase large chain.